The sequence spans 463 residues: Homoserine O-acetyltransferase FUB5 (463 aa).

The region spanning 113–436 (NVMIICHALS…VSDDGHDAFL (324 aa)) is the AB hydrolase-1 domain. The Nucleophile role is filled by serine 211. Residues 296–312 (RFGRDTGSKKKTQKQES) are compositionally biased toward basic and acidic residues. The disordered stretch occupies residues 296-331 (RFGRDTGSKKKTQKQESKTLPSNSTPIHSHSGADET). Residues aspartate 403 and histidine 432 contribute to the active site.

It belongs to the AB hydrolase superfamily. MetX family.

It carries out the reaction L-homoserine + acetyl-CoA = O-acetyl-L-homoserine + CoA. Its pathway is mycotoxin biosynthesis. Its function is as follows. Homoserine O-acetyltransferase; part of the gene cluster that mediates the biosynthesis of fusaric acid, a mycotoxin with low to moderate toxicity to animals and humans, but with high phytotoxic properties. L-aspartate is suggested as fusaric acid amino acid precursor that is activated and further processed to O-acetyl-L-homoserine by cluster enzymes aspartate kinase FUB3 and homoserine O-acetyltransferase FUB5, as well as enzymes of the primary metabolism. The polyketide synthase (PKS) FUB1 generates the triketide trans-2-hexenal which is presumptively released by the hydrolase FUB4 and linked to the NRPS-bound amino acid precursor by NAD(P)-dependent dehydrogenase FUB6. FUB1, FUB4, and the non-canonical NRPS Fub8 may form an enzyme complex. Further processing of the NRPS-bound intermediate might be carried out by FUB6 and the sulfhydrylase FUB7, enabling a spontaneous electrocyclization to close the carbon backbone of fusaric acid. Dihydrofusaric acid is likely to be released via reduction by the thioester reductase (TR) domain of FUB8 whereupon the final oxidation to fusaric acid may (also) be performed by the FMN-dependent dehydrogenase FUB9. The polypeptide is Homoserine O-acetyltransferase FUB5 (Gibberella moniliformis (strain M3125 / FGSC 7600) (Maize ear and stalk rot fungus)).